Here is a 220-residue protein sequence, read N- to C-terminus: Dual specificity protein phosphatase 19 (220 aa).

At M1 the chain carries N-acetylmethionine. The Tyrosine-protein phosphatase domain occupies 64–205; it reads QVGVIKPWLL…LRTYQVGKES (142 aa). Catalysis depends on C149, which acts as the Phosphocysteine intermediate.

The protein belongs to the protein-tyrosine phosphatase family. Non-receptor class dual specificity subfamily.

It catalyses the reaction O-phospho-L-tyrosyl-[protein] + H2O = L-tyrosyl-[protein] + phosphate. The enzyme catalyses O-phospho-L-seryl-[protein] + H2O = L-seryl-[protein] + phosphate. It carries out the reaction O-phospho-L-threonyl-[protein] + H2O = L-threonyl-[protein] + phosphate. With respect to regulation, phosphatase activity is enhanced by Ca(2+) and Mn(2+). Has a dual specificity toward Ser/Thr and Tyr-containing proteins. The sequence is that of Dual specificity protein phosphatase 19 from Mus musculus (Mouse).